The primary structure comprises 879 residues: Leucine--tRNA ligase (879 aa).

The 'HIGH' region signature appears at 45 to 55 (PYPSGALHMGH). Positions 637–641 (KMSKS) match the 'KMSKS' region motif. K640 contacts ATP.

This sequence belongs to the class-I aminoacyl-tRNA synthetase family.

It is found in the cytoplasm. The enzyme catalyses tRNA(Leu) + L-leucine + ATP = L-leucyl-tRNA(Leu) + AMP + diphosphate. In Xylella fastidiosa (strain M12), this protein is Leucine--tRNA ligase.